We begin with the raw amino-acid sequence, 215 residues long: MNQTLLSKFGKPIERIKNAILALKSGQGVIILDDEERENEGDLVFACENMTVEQMALSIRYGSGIVCLCITESKRKQLNLPMMVKKNTSAYRTGFTVTIEASKGISTGVSAKDRLTTIKTAIADDAKPSDLNRPGHVFPLRAHKGGVLSRPGHTEAAIEIVSLAGFKPAGVICELTNKDGTMARTPEIIKFSENKKMQVLTIQDLIFYIKNINHL.

D-ribulose 5-phosphate is bound by residues 37-38 (RE), aspartate 42, 150-154 (RPGHT), and glutamate 174. Position 38 (glutamate 38) interacts with Mg(2+). Histidine 153 contacts Mg(2+).

The protein belongs to the DHBP synthase family. As to quaternary structure, homodimer. Mg(2+) is required as a cofactor. Requires Mn(2+) as cofactor.

The catalysed reaction is D-ribulose 5-phosphate = (2S)-2-hydroxy-3-oxobutyl phosphate + formate + H(+). It functions in the pathway cofactor biosynthesis; riboflavin biosynthesis; 2-hydroxy-3-oxobutyl phosphate from D-ribulose 5-phosphate: step 1/1. Its function is as follows. Catalyzes the conversion of D-ribulose 5-phosphate to formate and 3,4-dihydroxy-2-butanone 4-phosphate. The chain is 3,4-dihydroxy-2-butanone 4-phosphate synthase from Buchnera aphidicola subsp. Acyrthosiphon pisum (strain 5A).